Here is a 180-residue protein sequence, read N- to C-terminus: Putative 5'(3')-deoxyribonucleotidase (180 aa).

Aspartate 9 functions as the Nucleophile in the catalytic mechanism. Positions 9, 11, and 135 each coordinate Mg(2+). The active-site Proton donor is the aspartate 11.

Belongs to the 5'(3')-deoxyribonucleotidase family. Requires Mg(2+) as cofactor.

In terms of biological role, dephosphorylates the 5' and 2'(3')-phosphates of deoxyribonucleotides. This chain is Putative 5'(3')-deoxyribonucleotidase, found in Staphylococcus aureus (strain MSSA476).